The chain runs to 405 residues: L-carnitine CoA-transferase (405 aa).

The CoA site is built by lysine 97 and arginine 104. Aspartate 169 (nucleophile) is an active-site residue.

This sequence belongs to the CoA-transferase III family. CaiB subfamily. As to quaternary structure, homodimer.

Its subcellular location is the cytoplasm. The enzyme catalyses crotonobetainyl-CoA + (R)-carnitine = crotonobetaine + (R)-carnitinyl-CoA. The catalysed reaction is 4-(trimethylamino)butanoyl-CoA + (R)-carnitine = (R)-carnitinyl-CoA + 4-(trimethylamino)butanoate. Its pathway is amine and polyamine metabolism; carnitine metabolism. In terms of biological role, catalyzes the reversible transfer of the CoA moiety from gamma-butyrobetainyl-CoA to L-carnitine to generate L-carnitinyl-CoA and gamma-butyrobetaine. Is also able to catalyze the reversible transfer of the CoA moiety from gamma-butyrobetainyl-CoA or L-carnitinyl-CoA to crotonobetaine to generate crotonobetainyl-CoA. The protein is L-carnitine CoA-transferase of Escherichia coli O139:H28 (strain E24377A / ETEC).